Consider the following 209-residue polypeptide: Uracil phosphoribosyltransferase (209 aa).

Residues R79, R104, and 131–139 (DPMLATANS) each bind 5-phospho-alpha-D-ribose 1-diphosphate. Uracil contacts are provided by residues I194 and 199–201 (GDA). D200 contributes to the 5-phospho-alpha-D-ribose 1-diphosphate binding site.

Belongs to the UPRTase family. Requires Mg(2+) as cofactor.

It carries out the reaction UMP + diphosphate = 5-phospho-alpha-D-ribose 1-diphosphate + uracil. It functions in the pathway pyrimidine metabolism; UMP biosynthesis via salvage pathway; UMP from uracil: step 1/1. Its activity is regulated as follows. Allosterically activated by GTP. Functionally, catalyzes the conversion of uracil and 5-phospho-alpha-D-ribose 1-diphosphate (PRPP) to UMP and diphosphate. This chain is Uracil phosphoribosyltransferase, found in Mesorhizobium japonicum (strain LMG 29417 / CECT 9101 / MAFF 303099) (Mesorhizobium loti (strain MAFF 303099)).